Consider the following 145-residue polypeptide: Basic phospholipase A2 cPm05 (145 aa).

The first 21 residues, 1 to 21 (MYPAHLLVLLAVCISLLGASA), serve as a signal peptide directing secretion. A propeptide spanning residues 22–27 (IPPLPL) is cleaved from the precursor. Intrachain disulfides connect cysteine 38–cysteine 98, cysteine 54–cysteine 144, cysteine 56–cysteine 72, cysteine 71–cysteine 125, cysteine 78–cysteine 118, cysteine 87–cysteine 111, and cysteine 105–cysteine 116. Ca(2+) contacts are provided by tyrosine 55, glycine 57, and glycine 59. Histidine 75 is an active-site residue. Residue aspartate 76 participates in Ca(2+) binding. Aspartate 119 is a catalytic residue.

This sequence belongs to the phospholipase A2 family. Group I subfamily. D49 sub-subfamily. It depends on Ca(2+) as a cofactor. As to expression, expressed by the venom gland.

It is found in the secreted. The enzyme catalyses a 1,2-diacyl-sn-glycero-3-phosphocholine + H2O = a 1-acyl-sn-glycero-3-phosphocholine + a fatty acid + H(+). Its function is as follows. PLA2 catalyzes the calcium-dependent hydrolysis of the 2-acyl groups in 3-sn-phosphoglycerides. This is Basic phospholipase A2 cPm05 from Laticauda semifasciata (Black-banded sea krait).